The primary structure comprises 338 residues: MIHKNWAELIKPQQLDVKPGNDPARQATVTAEPLERGFGLTMGNALRRVLMSSLQGAAITSVQIDNVLHEFSSVAGVREDVTDIILNLKGVSIRMEVEGPKRLSISAKGPGVVTAGDISESAGIEILNRDHVICHLDDGADVYMELTVNQGKGYVSAEKNKPEDAPIGLIPIDAIYSPVKKVSYDVQPTREGQVLDYDKLTMKVETDGSLTPDDAVAFAARILQDQLGIFVNFEEPESASRADEDDGLEFNPLLLKKVDDLELSVRSANCLKNDNIVYIGDLIQKTEAEMLRTPNFGRKSLNEIKEVLSGMGLHLGMDVEDWPPDNIEDLAKKFEDSF.

The alpha N-terminal domain (alpha-NTD) stretch occupies residues 1–234 (MIHKNWAELI…DQLGIFVNFE (234 aa)). Residues 250–338 (FNPLLLKKVD…DLAKKFEDSF (89 aa)) are alpha C-terminal domain (alpha-CTD).

This sequence belongs to the RNA polymerase alpha chain family. As to quaternary structure, homodimer. The RNAP catalytic core consists of 2 alpha, 1 beta, 1 beta' and 1 omega subunit. When a sigma factor is associated with the core the holoenzyme is formed, which can initiate transcription.

The enzyme catalyses RNA(n) + a ribonucleoside 5'-triphosphate = RNA(n+1) + diphosphate. DNA-dependent RNA polymerase catalyzes the transcription of DNA into RNA using the four ribonucleoside triphosphates as substrates. The polypeptide is DNA-directed RNA polymerase subunit alpha (Roseobacter denitrificans (strain ATCC 33942 / OCh 114) (Erythrobacter sp. (strain OCh 114))).